Consider the following 234-residue polypeptide: LRP chaperone MESD (234 aa).

The N-terminal stretch at 1 to 33 (MAASRWARKAVVLLCASDLLLLLLLLPPPGSCA) is a signal peptide. A chaperone domain region spans residues 1–164 (MAASRWARKA…DRAIFMLRDG (164 aa)). Disordered regions lie at residues 31 to 95 (SCAA…DFSK) and 187 to 234 (GQVY…REDL). Over residues 54 to 70 (DIRDYNDADMARLLEQW) the composition is skewed to basic and acidic residues. Residues 71–80 (EKDDDIEEGD) show a composition bias toward acidic residues. Positions 165–204 (SYAWEIKDFLVGQDRCADVTLEGQVYPGKGGGSKEKNKTK) are escort domain. Basic and acidic residues predominate over residues 196–234 (GSKEKNKTKQDKGKKKKEGDLKSRSSKEENRAGNKREDL). Asn-201 is a glycosylation site (N-linked (GlcNAc...) asparagine). Residues 231-234 (REDL) carry the Prevents secretion from ER motif.

The protein belongs to the MESD family. Monomer. Interacts with LRP5; the interaction prevents LRP5 from forming aggregates and chaperones LRP6 to the plasma membrane. Interacts with LRP6; the interaction prevents LRP6 from forming aggregates and chaperones LRP6 to the plasma membrane. Interacts with LRP4; the interaction promotes glycosylation of LRP4 and its cell-surface expression.

It is found in the endoplasmic reticulum. Its function is as follows. Chaperone specifically assisting the folding of beta-propeller/EGF modules within the family of low-density lipoprotein receptors (LDLRs). Acts as a modulator of the Wnt pathway through chaperoning the coreceptors of the canonical Wnt pathway, LRP5 and LRP6, to the plasma membrane. Essential for specification of embryonic polarity and mesoderm induction. Plays an essential role in neuromuscular junction (NMJ) formation by promoting cell-surface expression of LRP4. May regulate phagocytosis of apoptotic retinal pigment epithelium (RPE) cells. The chain is LRP chaperone MESD from Homo sapiens (Human).